The primary structure comprises 123 residues: U9-barytoxin-Tl1a (123 aa).

The signal sequence occupies residues 1-18 (MNTMITFLVLFVLTAANG). The propeptide occupies 19–77 (APEANERKIPEAIHNEDQSLAEMAEELMFFLQQTEFEAPLLQEEEEAEXAEXRNSRERR). 3 cysteine pairs are disulfide-bonded: cysteine 78–cysteine 93, cysteine 85–cysteine 98, and cysteine 92–cysteine 112.

The protein belongs to the neurotoxin 14 (magi-1) family. 05 (ICK-7) subfamily. ICK-7 sub-subfamily. Expressed by the venom gland.

The protein resides in the secreted. Its function is as follows. Ion channel inhibitor. The chain is U9-barytoxin-Tl1a from Trittame loki (Brush-footed trapdoor spider).